The sequence spans 37 residues: Large ribosomal subunit protein bL36c (37 aa).

Belongs to the bacterial ribosomal protein bL36 family.

The protein localises to the plastid. The protein resides in the chloroplast. This chain is Large ribosomal subunit protein bL36c, found in Cycas taitungensis (Prince sago).